We begin with the raw amino-acid sequence, 294 residues long: Beta-lactamase (294 aa).

Residues 1–30 form the signal peptide; sequence MKHSSLRRSLLLAGITLPLVSFALPAWANA. The active-site Acyl-ester intermediate is Ser-75. 239–241 provides a ligand contact to substrate; that stretch reads KTG.

This sequence belongs to the class-A beta-lactamase family.

It carries out the reaction a beta-lactam + H2O = a substituted beta-amino acid. In Yersinia enterocolitica, this protein is Beta-lactamase (blaA).